The following is a 166-amino-acid chain: Lipoprotein signal peptidase (166 aa).

The next 3 membrane-spanning stretches (helical) occupy residues 12-32 (WLWL…LILQ), 70-90 (WFFA…MYRS), and 102-122 (ALII…GFVV). Active-site residues include Asp-123 and Asp-141. The chain crosses the membrane as a helical span at residues 137–157 (FNLADTAICIGAALIVLEGFL).

This sequence belongs to the peptidase A8 family.

It is found in the cell inner membrane. It catalyses the reaction Release of signal peptides from bacterial membrane prolipoproteins. Hydrolyzes -Xaa-Yaa-Zaa-|-(S,diacylglyceryl)Cys-, in which Xaa is hydrophobic (preferably Leu), and Yaa (Ala or Ser) and Zaa (Gly or Ala) have small, neutral side chains.. Its pathway is protein modification; lipoprotein biosynthesis (signal peptide cleavage). Its function is as follows. This protein specifically catalyzes the removal of signal peptides from prolipoproteins. The sequence is that of Lipoprotein signal peptidase from Salmonella paratyphi A (strain ATCC 9150 / SARB42).